Reading from the N-terminus, the 504-residue chain is ATP synthase subunit alpha, chloroplastic (504 aa).

Position 170–177 (170–177) interacts with ATP; the sequence is GDRQTGKT.

Belongs to the ATPase alpha/beta chains family. F-type ATPases have 2 components, CF(1) - the catalytic core - and CF(0) - the membrane proton channel. CF(1) has five subunits: alpha(3), beta(3), gamma(1), delta(1), epsilon(1). CF(0) has four main subunits: a, b, b' and c.

It localises to the plastid. It is found in the chloroplast thylakoid membrane. It catalyses the reaction ATP + H2O + 4 H(+)(in) = ADP + phosphate + 5 H(+)(out). Functionally, produces ATP from ADP in the presence of a proton gradient across the membrane. The alpha chain is a regulatory subunit. In Pyropia yezoensis (Susabi-nori), this protein is ATP synthase subunit alpha, chloroplastic.